A 691-amino-acid chain; its full sequence is Two-component response regulator ORR21 (691 aa).

The Response regulatory domain occupies 17–132 (KVLVVDDDPT…ELKNIWQHVI (116 aa)). At aspartate 68 the chain carries 4-aspartylphosphate. Positions 139–155 (NKEHEHSGSLDDTDRTR) are enriched in basic and acidic residues. 2 disordered regions span residues 139-204 (NKEH…KKPR) and 616-647 (SHPGSSSSSFQSSNVALGKLPDQGRGKNHGFV). A DNA-binding region (myb-like GARP) is located at residues 199–258 (TSKKPRVVWSVELHQQFVNAVNHLGIDKAVPKKILELMNVPGLTRENVASHLQKFRLYLK). Residues 616–628 (SHPGSSSSSFQSS) show a composition bias toward low complexity.

It belongs to the ARR family. Type-B subfamily. Two-component system major event consists of a His-to-Asp phosphorelay between a sensor histidine kinase (HK) and a response regulator (RR). In plants, the His-to-Asp phosphorelay involves an additional intermediate named Histidine-containing phosphotransfer protein (HPt). This multistep phosphorelay consists of a His-Asp-His-Asp sequential transfer of a phosphate group between first a His and an Asp of the HK protein, followed by the transfer to a conserved His of the HPt protein and finally the transfer to an Asp in the receiver domain of the RR protein.

It localises to the nucleus. Functionally, transcriptional activator that binds specific DNA sequence. Functions as a response regulator involved in His-to-Asp phosphorelay signal transduction system. Phosphorylation of the Asp residue in the receiver domain activates the ability of the protein to promote the transcription of target genes. May directly activate some type-A response regulators in response to cytokinins. This chain is Two-component response regulator ORR21, found in Oryza sativa subsp. indica (Rice).